The following is a 352-amino-acid chain: Glycerol-1-phosphate dehydrogenase [NAD(P)+] (352 aa).

NAD(+)-binding positions include 98-102 and 120-123; these read GKAID and TAAS. Aspartate 125 contributes to the substrate binding site. Residue serine 129 participates in NAD(+) binding. Aspartate 172 is a substrate binding site. Aspartate 172 and histidine 252 together coordinate Zn(2+). Histidine 256 contacts substrate. Histidine 268 provides a ligand contact to Zn(2+).

The protein belongs to the glycerol-1-phosphate dehydrogenase family. Requires Zn(2+) as cofactor.

It localises to the cytoplasm. The enzyme catalyses sn-glycerol 1-phosphate + NAD(+) = dihydroxyacetone phosphate + NADH + H(+). The catalysed reaction is sn-glycerol 1-phosphate + NADP(+) = dihydroxyacetone phosphate + NADPH + H(+). It participates in membrane lipid metabolism; glycerophospholipid metabolism. Its function is as follows. Catalyzes the NAD(P)H-dependent reduction of dihydroxyacetonephosphate (DHAP or glycerone phosphate) to glycerol 1-phosphate (G1P). The G1P thus generated is used as the glycerophosphate backbone of phospholipids in the cellular membranes of Archaea. In Haloarcula marismortui (strain ATCC 43049 / DSM 3752 / JCM 8966 / VKM B-1809) (Halobacterium marismortui), this protein is Glycerol-1-phosphate dehydrogenase [NAD(P)+].